The following is a 134-amino-acid chain: Endoribonuclease YbeY (134 aa).

3 residues coordinate Zn(2+): His-94, His-98, and His-104.

The protein belongs to the endoribonuclease YbeY family. Requires Zn(2+) as cofactor.

The protein localises to the cytoplasm. Single strand-specific metallo-endoribonuclease involved in late-stage 70S ribosome quality control and in maturation of the 3' terminus of the 16S rRNA. The chain is Endoribonuclease YbeY from Campylobacter jejuni subsp. jejuni serotype O:23/36 (strain 81-176).